The sequence spans 589 residues: GTPase LSG1-2 (589 aa).

A disordered region spans residues 1–26; sequence MGKSEKTSLGRSLVKHHNHMIQESKD. Positions 158 to 366 constitute a CP-type G domain; the sequence is WRQLWRVLER…LCDCPGLVFP (209 aa). Residues 176-180 carry the DARXP motif motif; sequence DARDP. Residues 206 to 209 form a G4 region; that stretch reads NKAD. 206–209 lines the GTP pocket; sequence NKAD. Residues 237–239 are G5; sequence AAT. A G1 region spans residues 315 to 322; it reads GYPNVGKS. 318 to 323 contacts GTP; that stretch reads NVGKSS. The segment at 341–345 is G2; sequence GKTKH. The interval 359–362 is G3; that stretch reads DCPG. A GTP-binding site is contributed by G362. Acidic residues predominate over residues 495-509; it reads GSESDDSAVGDETEN. 2 disordered regions span residues 495–515 and 534–589; these read GSES…VPGI and SKKV…LTMR. The Nuclear localization signal motif lies at 534–541; it reads SKKVTAKK. Over residues 534–558 the composition is skewed to basic residues; the sequence is SKKVTAKKQTASHKQHKKPQRKKDR. The span at 580–589 shows a compositional bias: polar residues; the sequence is PANTGPLTMR.

It belongs to the TRAFAC class YlqF/YawG GTPase family. As to expression, ubiquitous, with the highest expression in reproductive and strongly dividing tissues.

It is found in the cytoplasm. It localises to the nucleus. In terms of biological role, GTPase involved in ribosome biogenesis. Binds to 23S rRNA and associates with 60S pre-ribosomes. Involved in early cotyledon and leaf development. The chain is GTPase LSG1-2 from Arabidopsis thaliana (Mouse-ear cress).